Consider the following 336-residue polypeptide: DNA-directed RNA polymerase subunit alpha (336 aa).

The tract at residues 1–234 is alpha N-terminal domain (alpha-NTD); that stretch reads MIEFVIPKKL…NHFKIVTEGL (234 aa). Positions 269–336 are alpha C-terminal domain (alpha-CTD); that stretch reads VYNRKIDELE…KFGLELRKGE (68 aa).

It belongs to the RNA polymerase alpha chain family. As to quaternary structure, homodimer. The RNAP catalytic core consists of 2 alpha, 1 beta, 1 beta' and 1 omega subunit. When a sigma factor is associated with the core the holoenzyme is formed, which can initiate transcription.

The enzyme catalyses RNA(n) + a ribonucleoside 5'-triphosphate = RNA(n+1) + diphosphate. Its function is as follows. DNA-dependent RNA polymerase catalyzes the transcription of DNA into RNA using the four ribonucleoside triphosphates as substrates. The polypeptide is DNA-directed RNA polymerase subunit alpha (Thermotoga petrophila (strain ATCC BAA-488 / DSM 13995 / JCM 10881 / RKU-1)).